A 64-amino-acid chain; its full sequence is DNA gyrase inhibitor YacG (64 aa).

Positions 9, 12, 28, and 32 each coordinate Zn(2+). Residues 42–64 (DEENAIPGAPDMSDSDGWSEEQY) form a disordered region. Residues 54 to 64 (SDSDGWSEEQY) are compositionally biased toward acidic residues.

It belongs to the DNA gyrase inhibitor YacG family. In terms of assembly, interacts with GyrB. The cofactor is Zn(2+).

Its function is as follows. Inhibits all the catalytic activities of DNA gyrase by preventing its interaction with DNA. Acts by binding directly to the C-terminal domain of GyrB, which probably disrupts DNA binding by the gyrase. This is DNA gyrase inhibitor YacG from Vibrio vulnificus (strain YJ016).